Here is a 330-residue protein sequence, read N- to C-terminus: Glycerol-3-phosphate dehydrogenase [NAD(P)+] 1 (330 aa).

The NADPH site is built by tryptophan 15, arginine 35, and lysine 105. Sn-glycerol 3-phosphate contacts are provided by lysine 105, glycine 133, and threonine 135. An NADPH-binding site is contributed by alanine 137. Residues lysine 188, aspartate 241, serine 251, arginine 252, and asparagine 253 each coordinate sn-glycerol 3-phosphate. Lysine 188 (proton acceptor) is an active-site residue. Arginine 252 contributes to the NADPH binding site. Positions 276 and 278 each coordinate NADPH.

Belongs to the NAD-dependent glycerol-3-phosphate dehydrogenase family.

The protein localises to the cytoplasm. It carries out the reaction sn-glycerol 3-phosphate + NAD(+) = dihydroxyacetone phosphate + NADH + H(+). The enzyme catalyses sn-glycerol 3-phosphate + NADP(+) = dihydroxyacetone phosphate + NADPH + H(+). It participates in membrane lipid metabolism; glycerophospholipid metabolism. In terms of biological role, catalyzes the reduction of the glycolytic intermediate dihydroxyacetone phosphate (DHAP) to sn-glycerol 3-phosphate (G3P), the key precursor for phospholipid synthesis. This is Glycerol-3-phosphate dehydrogenase [NAD(P)+] 1 from Sphingopyxis alaskensis (strain DSM 13593 / LMG 18877 / RB2256) (Sphingomonas alaskensis).